The sequence spans 803 residues: Phenylalanine--tRNA ligase beta subunit (803 aa).

Residues 39-150 (AKVLAPFTIA…ADAPVGAAYA (112 aa)) enclose the tRNA-binding domain. Residues 400–475 (ADDKIIDFPL…RIVGVDKVPL (76 aa)) form the B5 domain. Mg(2+) is bound by residues Asp-453, Asp-459, Glu-462, and Glu-463. One can recognise an FDX-ACB domain in the interval 709 to 802 (SAFHPVSRDF…VTKKTGGSLR (94 aa)).

It belongs to the phenylalanyl-tRNA synthetase beta subunit family. Type 1 subfamily. In terms of assembly, tetramer of two alpha and two beta subunits. The cofactor is Mg(2+).

Its subcellular location is the cytoplasm. The enzyme catalyses tRNA(Phe) + L-phenylalanine + ATP = L-phenylalanyl-tRNA(Phe) + AMP + diphosphate + H(+). The protein is Phenylalanine--tRNA ligase beta subunit of Rhodopseudomonas palustris (strain ATCC BAA-98 / CGA009).